The following is a 277-amino-acid chain: 4-hydroxy-3-methylbut-2-enyl diphosphate reductase (277 aa).

Cys-12 serves as a coordination point for [4Fe-4S] cluster. (2E)-4-hydroxy-3-methylbut-2-enyl diphosphate-binding residues include His-36 and His-70. The dimethylallyl diphosphate site is built by His-36 and His-70. The isopentenyl diphosphate site is built by His-36 and His-70. Cys-92 provides a ligand contact to [4Fe-4S] cluster. His-120 serves as a coordination point for (2E)-4-hydroxy-3-methylbut-2-enyl diphosphate. Position 120 (His-120) interacts with dimethylallyl diphosphate. His-120 contacts isopentenyl diphosphate. Glu-122 (proton donor) is an active-site residue. Residue Thr-158 coordinates (2E)-4-hydroxy-3-methylbut-2-enyl diphosphate. Cys-186 provides a ligand contact to [4Fe-4S] cluster. Residues Ser-214, Asn-216, and Ser-258 each coordinate (2E)-4-hydroxy-3-methylbut-2-enyl diphosphate. 3 residues coordinate dimethylallyl diphosphate: Ser-214, Asn-216, and Ser-258. Ser-214, Asn-216, and Ser-258 together coordinate isopentenyl diphosphate.

Belongs to the IspH family. [4Fe-4S] cluster is required as a cofactor.

The enzyme catalyses isopentenyl diphosphate + 2 oxidized [2Fe-2S]-[ferredoxin] + H2O = (2E)-4-hydroxy-3-methylbut-2-enyl diphosphate + 2 reduced [2Fe-2S]-[ferredoxin] + 2 H(+). It carries out the reaction dimethylallyl diphosphate + 2 oxidized [2Fe-2S]-[ferredoxin] + H2O = (2E)-4-hydroxy-3-methylbut-2-enyl diphosphate + 2 reduced [2Fe-2S]-[ferredoxin] + 2 H(+). Its pathway is isoprenoid biosynthesis; dimethylallyl diphosphate biosynthesis; dimethylallyl diphosphate from (2E)-4-hydroxy-3-methylbutenyl diphosphate: step 1/1. It participates in isoprenoid biosynthesis; isopentenyl diphosphate biosynthesis via DXP pathway; isopentenyl diphosphate from 1-deoxy-D-xylulose 5-phosphate: step 6/6. Its function is as follows. Catalyzes the conversion of 1-hydroxy-2-methyl-2-(E)-butenyl 4-diphosphate (HMBPP) into a mixture of isopentenyl diphosphate (IPP) and dimethylallyl diphosphate (DMAPP). Acts in the terminal step of the DOXP/MEP pathway for isoprenoid precursor biosynthesis. The sequence is that of 4-hydroxy-3-methylbut-2-enyl diphosphate reductase from Campylobacter jejuni subsp. doylei (strain ATCC BAA-1458 / RM4099 / 269.97).